The chain runs to 276 residues: Hydroxyethylthiazole kinase (276 aa).

Residues Arg126 and Ser172 each contribute to the ATP site. Gly199 is a substrate binding site.

It belongs to the Thz kinase family. Mg(2+) serves as cofactor.

It catalyses the reaction 5-(2-hydroxyethyl)-4-methylthiazole + ATP = 4-methyl-5-(2-phosphooxyethyl)-thiazole + ADP + H(+). It participates in cofactor biosynthesis; thiamine diphosphate biosynthesis; 4-methyl-5-(2-phosphoethyl)-thiazole from 5-(2-hydroxyethyl)-4-methylthiazole: step 1/1. Functionally, catalyzes the phosphorylation of the hydroxyl group of 4-methyl-5-beta-hydroxyethylthiazole (THZ). This is Hydroxyethylthiazole kinase from Burkholderia pseudomallei (strain 1106a).